The chain runs to 238 residues: 1-(5-phosphoribosyl)-5-[(5-phosphoribosylamino)methylideneamino] imidazole-4-carboxamide isomerase (238 aa).

The active-site Proton acceptor is D8. The active-site Proton donor is the D130.

The protein belongs to the HisA/HisF family.

Its subcellular location is the cytoplasm. It carries out the reaction 1-(5-phospho-beta-D-ribosyl)-5-[(5-phospho-beta-D-ribosylamino)methylideneamino]imidazole-4-carboxamide = 5-[(5-phospho-1-deoxy-D-ribulos-1-ylimino)methylamino]-1-(5-phospho-beta-D-ribosyl)imidazole-4-carboxamide. It functions in the pathway amino-acid biosynthesis; L-histidine biosynthesis; L-histidine from 5-phospho-alpha-D-ribose 1-diphosphate: step 4/9. In Methanococcus maripaludis (strain C6 / ATCC BAA-1332), this protein is 1-(5-phosphoribosyl)-5-[(5-phosphoribosylamino)methylideneamino] imidazole-4-carboxamide isomerase.